The primary structure comprises 232 residues: Ubiquinone biosynthesis O-methyltransferase (232 aa).

Residues R36, G55, D76, and M120 each coordinate S-adenosyl-L-methionine.

This sequence belongs to the methyltransferase superfamily. UbiG/COQ3 family.

It catalyses the reaction a 3-demethylubiquinol + S-adenosyl-L-methionine = a ubiquinol + S-adenosyl-L-homocysteine + H(+). The catalysed reaction is a 3-(all-trans-polyprenyl)benzene-1,2-diol + S-adenosyl-L-methionine = a 2-methoxy-6-(all-trans-polyprenyl)phenol + S-adenosyl-L-homocysteine + H(+). It functions in the pathway cofactor biosynthesis; ubiquinone biosynthesis. In terms of biological role, O-methyltransferase that catalyzes the 2 O-methylation steps in the ubiquinone biosynthetic pathway. This is Ubiquinone biosynthesis O-methyltransferase from Burkholderia mallei (strain ATCC 23344).